The chain runs to 74 residues: U4-theraphotoxin-Cg1a (74 aa).

Positions 1 to 19 are cleaved as a signal peptide; it reads MNATIFAFLLLLNLAMHNA. The propeptide occupies 20 to 39; the sequence is TEQSSETDMDDTLLIPEINR. Disulfide bonds link Cys42/Cys56, Cys49/Cys61, and Cys55/Cys71.

It belongs to the neurotoxin 36 family. 01 subfamily. As to expression, expressed by the venom gland.

Its subcellular location is the secreted. In terms of biological role, probable ion channel inhibitor. The sequence is that of U4-theraphotoxin-Cg1a from Chilobrachys guangxiensis (Chinese earth tiger tarantula).